Here is a 341-residue protein sequence, read N- to C-terminus: L-threonine 3-dehydrogenase (341 aa).

Cys-38 is a binding site for Zn(2+). Residues Thr-40 and His-43 each act as charge relay system in the active site. The Zn(2+) site is built by His-63, Glu-64, Cys-93, Cys-96, Cys-99, and Cys-107. Residues Ile-175, Asp-195, Arg-200, 262–264 (LGI), and 286–287 (IY) contribute to the NAD(+) site.

Belongs to the zinc-containing alcohol dehydrogenase family. Homotetramer. Requires Zn(2+) as cofactor.

It localises to the cytoplasm. The catalysed reaction is L-threonine + NAD(+) = (2S)-2-amino-3-oxobutanoate + NADH + H(+). Its pathway is amino-acid degradation; L-threonine degradation via oxydo-reductase pathway; glycine from L-threonine: step 1/2. Its function is as follows. Catalyzes the NAD(+)-dependent oxidation of L-threonine to 2-amino-3-ketobutyrate. This is L-threonine 3-dehydrogenase from Shewanella sp. (strain W3-18-1).